Reading from the N-terminus, the 151-residue chain is MSEQGSYDIQQVLKALPHRYPLLLVDRVKSMDLGERIHAVKGVTMNEEFFQGHFPGAPIMPGVLQVEAMAQAAAILGIETLELAGTGKLVFFMGIENAKFRKPVTPGCLLDLEVEFTQKRSRVYKFRGKASVEGVTTSEAEFTAMIADPPA.

His53 is an active-site residue.

Belongs to the thioester dehydratase family. FabZ subfamily.

It is found in the cytoplasm. The enzyme catalyses a (3R)-hydroxyacyl-[ACP] = a (2E)-enoyl-[ACP] + H2O. Involved in unsaturated fatty acids biosynthesis. Catalyzes the dehydration of short chain beta-hydroxyacyl-ACPs and long chain saturated and unsaturated beta-hydroxyacyl-ACPs. The polypeptide is 3-hydroxyacyl-[acyl-carrier-protein] dehydratase FabZ (Erythrobacter litoralis (strain HTCC2594)).